The chain runs to 320 residues: Ferrochelatase (320 aa).

Residues His194 and Glu275 each contribute to the Fe cation site.

The protein belongs to the ferrochelatase family. In terms of assembly, monomer.

The protein localises to the cytoplasm. The catalysed reaction is heme b + 2 H(+) = protoporphyrin IX + Fe(2+). The protein operates within porphyrin-containing compound metabolism; protoheme biosynthesis; protoheme from protoporphyrin-IX: step 1/1. In terms of biological role, catalyzes the ferrous insertion into protoporphyrin IX. This Salmonella agona (strain SL483) protein is Ferrochelatase.